A 1507-amino-acid chain; its full sequence is Paired amphipathic helix protein sin-3 (1507 aa).

5 disordered regions span residues 1-26 (MYNP…TNNA), 228-286 (PLAL…PPRV), 397-450 (ELGS…MMEE), 543-569 (VDDV…DSSK), and 1349-1434 (IPRE…MDHL). Polar residues predominate over residues 16-26 (DQSQQQPTNNA). A compositionally biased stretch (basic residues) spans 270–279 (RQNRPGRRKK). The PAH domain occupies 282-352 (GPPRVDEALA…LGFNTFLPTG (71 aa)). Residues 427 to 438 (DGIDDEDDEESG) are compositionally biased toward acidic residues. 2 stretches are compositionally biased toward basic and acidic residues: residues 439–450 (IEDKNNEEMMEE) and 555–568 (EIKK…KDSS). Composition is skewed to acidic residues over residues 1354–1365 (KDDDDDDDEEGN), 1373–1382 (NVKDEDDGGD), and 1389–1421 (PDDD…DEPE).

In terms of assembly, component of the SIN3S complex, which contains at least sin-3, hda-1, athp-1 and mrg-1. Interacts with ztf-11; the interaction is weak. Interacts with cfp-1. Expressed in all ray structural cells including ray 6, 7, 8 and 9 of the male tail. Also expressed in the inner labial neurons, socket cells, the cephalic neurons in the head and the ventral nerve cord.

It localises to the nucleus. In terms of biological role, probable transcriptional repressor required for the deposition of dimethylated 'Lys-9' of histone H3 (H3K9me2) on asynapsed chromosome pairs (both autosomes and sex chromosomes) during meiosis, but this does not seem to solely affect the transcriptional status. Plays a role in ray fusion and patterning in the male tail, and this may be through activity of the histone deacetylase complex (HDAC). This chain is Paired amphipathic helix protein sin-3, found in Caenorhabditis elegans.